Consider the following 188-residue polypeptide: Peptidyl-tRNA hydrolase (188 aa).

Tyrosine 15 is a binding site for tRNA. The active-site Proton acceptor is histidine 20. TRNA-binding residues include phenylalanine 66, asparagine 68, and asparagine 114.

It belongs to the PTH family. Monomer.

It localises to the cytoplasm. It catalyses the reaction an N-acyl-L-alpha-aminoacyl-tRNA + H2O = an N-acyl-L-amino acid + a tRNA + H(+). Functionally, hydrolyzes ribosome-free peptidyl-tRNAs (with 1 or more amino acids incorporated), which drop off the ribosome during protein synthesis, or as a result of ribosome stalling. In terms of biological role, catalyzes the release of premature peptidyl moieties from peptidyl-tRNA molecules trapped in stalled 50S ribosomal subunits, and thus maintains levels of free tRNAs and 50S ribosomes. This chain is Peptidyl-tRNA hydrolase, found in Lactococcus lactis subsp. cremoris (strain MG1363).